Consider the following 176-residue polypeptide: ATP-dependent protease subunit HslV (176 aa).

Thr-5 is an active-site residue. Residues Ser-161, Cys-164, and Thr-167 each contribute to the Na(+) site.

It belongs to the peptidase T1B family. HslV subfamily. As to quaternary structure, a double ring-shaped homohexamer of HslV is capped on each side by a ring-shaped HslU homohexamer. The assembly of the HslU/HslV complex is dependent on binding of ATP.

The protein resides in the cytoplasm. It catalyses the reaction ATP-dependent cleavage of peptide bonds with broad specificity.. With respect to regulation, allosterically activated by HslU binding. Functionally, protease subunit of a proteasome-like degradation complex believed to be a general protein degrading machinery. The polypeptide is ATP-dependent protease subunit HslV (Thermoanaerobacter sp. (strain X514)).